Reading from the N-terminus, the 209-residue chain is Uracil phosphoribosyltransferase (209 aa).

5-phospho-alpha-D-ribose 1-diphosphate-binding positions include arginine 79, arginine 104, and 131-139; that span reads DPMLATGGS. Uracil is bound by residues isoleucine 194 and 199–201; that span reads GDA. Aspartate 200 provides a ligand contact to 5-phospho-alpha-D-ribose 1-diphosphate.

The protein belongs to the UPRTase family. Mg(2+) serves as cofactor.

It catalyses the reaction UMP + diphosphate = 5-phospho-alpha-D-ribose 1-diphosphate + uracil. Its pathway is pyrimidine metabolism; UMP biosynthesis via salvage pathway; UMP from uracil: step 1/1. With respect to regulation, allosterically activated by GTP. Functionally, catalyzes the conversion of uracil and 5-phospho-alpha-D-ribose 1-diphosphate (PRPP) to UMP and diphosphate. This chain is Uracil phosphoribosyltransferase, found in Listeria monocytogenes serovar 1/2a (strain ATCC BAA-679 / EGD-e).